Reading from the N-terminus, the 505-residue chain is Putative ribose/galactose/methyl galactoside import ATP-binding protein 1 (505 aa).

2 consecutive ABC transporter domains span residues 10–245 (LRLE…VGRS) and 256–501 (RPTD…SGYG). 42–49 (GENGAGKS) serves as a coordination point for ATP.

Belongs to the ABC transporter superfamily. Carbohydrate importer 2 (CUT2) (TC 3.A.1.2) family.

It localises to the cell inner membrane. The enzyme catalyses D-ribose(out) + ATP + H2O = D-ribose(in) + ADP + phosphate + H(+). It carries out the reaction D-galactose(out) + ATP + H2O = D-galactose(in) + ADP + phosphate + H(+). Functionally, part of an ABC transporter complex involved in carbohydrate import. Could be involved in ribose, galactose and/or methyl galactoside import. Responsible for energy coupling to the transport system. The sequence is that of Putative ribose/galactose/methyl galactoside import ATP-binding protein 1 from Agrobacterium fabrum (strain C58 / ATCC 33970) (Agrobacterium tumefaciens (strain C58)).